The sequence spans 570 residues: MKVSLLAVLLLSIVAATYGQGECGSNPCENGSVCRDGEGTYICECQMGYDGQNCDRFTGANCGYNIFESTGVIESPNYPANYNNRADCLYLVRIKGARVITFTIEDFATEIFKDAVEYGVGPVADFNQALATFEGNLTANNQVPPPFSVQGEQAWFIFSTDRNIPRKGFRITFSSDGDDCTPNPCLNGATCVDQVNDYQCICAPGFTGDNCETDIDECASAPCRNGGACVDQVNGYTCNCIPGFNGVNCENNINECASIPCLNGGICVDGINQFACTCLPGYTGILCETDINECASSPCQNGGSCTDAVNRYTCDCRAGFTGSNCETNINECASSPCLNGGSCLDGVDGYVCQCLPNYTGTHCEISLDACASLPCQNGGVCTNVGGDYVCECLPGYTGINCEIDINECASLPCQNGGECINGIAMYICQCRQGYAGVNCEEVGFCDLEGVWFNECNDQITIIKTSTGMMLGDHMTFTERELGVAAPTVMVGYPSNNYDFPSFGITVVRDNGRTTTSWTGQCHLCDGQEVLYTTWIESSMVSTCEEIKRANKVGQDKWTRYEQSFAPQPDA.

An N-terminal signal peptide occupies residues 1–17 (MKVSLLAVLLLSIVAAT). The EGF-like 1 domain occupies 18-55 (YGQGECGSNPCENGSVCRDGEGTYICECQMGYDGQNCD). 4 disulfide bridges follow: Cys-23-Cys-34, Cys-28-Cys-43, Cys-45-Cys-54, and Cys-62-Cys-88. Asn-30 carries N-linked (GlcNAc...) asparagine glycosylation. The CUB domain maps to 62 to 175 (CGYNIFESTG…RKGFRITFSS (114 aa)). Asn-136 carries N-linked (GlcNAc...) asparagine glycosylation. Positions 176–212 (DGDDCTPNPCLNGATCVDQVNDYQCICAPGFTGDNCE) constitute an EGF-like 2; calcium-binding domain. 22 disulfides stabilise this stretch: Cys-180–Cys-191, Cys-185–Cys-200, Cys-202–Cys-211, Cys-218–Cys-229, Cys-223–Cys-238, Cys-240–Cys-249, Cys-256–Cys-267, Cys-261–Cys-276, Cys-278–Cys-287, Cys-294–Cys-305, Cys-299–Cys-314, Cys-316–Cys-325, Cys-332–Cys-343, Cys-337–Cys-352, Cys-354–Cys-363, Cys-370–Cys-381, Cys-375–Cys-390, Cys-392–Cys-401, Cys-408–Cys-419, Cys-413–Cys-428, Cys-430–Cys-439, and Cys-445–Cys-521. In terms of domain architecture, EGF-like 3; calcium-binding spans 214-250 (DIDECASAPCRNGGACVDQVNGYTCNCIPGFNGVNCE). In terms of domain architecture, EGF-like 4; calcium-binding spans 252 to 288 (NINECASIPCLNGGICVDGINQFACTCLPGYTGILCE). Residues 290-326 (DINECASSPCQNGGSCTDAVNRYTCDCRAGFTGSNCE) enclose the EGF-like 5; calcium-binding domain. One can recognise an EGF-like 6; calcium-binding domain in the interval 328–364 (NINECASSPCLNGGSCLDGVDGYVCQCLPNYTGTHCE). Residue Asn-357 is glycosylated (N-linked (GlcNAc...) asparagine). Positions 366–402 (SLDACASLPCQNGGVCTNVGGDYVCECLPGYTGINCE) constitute an EGF-like 7 domain. In terms of domain architecture, EGF-like 8; calcium-binding spans 404–440 (DINECASLPCQNGGECINGIAMYICQCRQGYAGVNCE). The Avidin-like domain occupies 443–562 (GFCDLEGVWF…GQDKWTRYEQ (120 aa)).

Homotetramer.

It localises to the secreted. The protein localises to the extracellular space. Forms the apical lamina, a component of the extracellular matrix. The protein is Fibropellin-3 (EGF3) of Strongylocentrotus purpuratus (Purple sea urchin).